Consider the following 241-residue polypeptide: uncharacterized protein (241 aa).

Disordered stretches follow at residues 19–59, 101–139, and 152–182; these read ERDR…QQLG, VRRPNPSVPSPLPKPPVPSAGSCEPLAPPPTSASGASRS, and RGCRPAPGSAAGWPRSDRRARLPRKASKPCS. Over residues 34–48 the composition is skewed to gly residues; the sequence is ARGGRGLWTVGGGGS. A compositionally biased stretch (polar residues) spans 49-58; the sequence is PTETAESQQL. Over residues 106 to 118 the composition is skewed to pro residues; the sequence is PSVPSPLPKPPVP.

This is an uncharacterized protein from Homo sapiens (Human).